The primary structure comprises 313 residues: Ornithine carbamoyltransferase (313 aa).

Residues 57–60 (STRT), Arg108, and 135–138 (HPTQ) contribute to the carbamoyl phosphate site. L-ornithine is bound by residues Asn167, Asp231, and 235–236 (SM). Residues 272-273 (CL) and Arg300 each bind carbamoyl phosphate.

This sequence belongs to the aspartate/ornithine carbamoyltransferase superfamily. OTCase family.

The protein localises to the cytoplasm. The catalysed reaction is carbamoyl phosphate + L-ornithine = L-citrulline + phosphate + H(+). It participates in amino-acid biosynthesis; L-arginine biosynthesis; L-arginine from L-ornithine and carbamoyl phosphate: step 1/3. Reversibly catalyzes the transfer of the carbamoyl group from carbamoyl phosphate (CP) to the N(epsilon) atom of ornithine (ORN) to produce L-citrulline. The protein is Ornithine carbamoyltransferase of Thermotoga maritima (strain ATCC 43589 / DSM 3109 / JCM 10099 / NBRC 100826 / MSB8).